We begin with the raw amino-acid sequence, 190 residues long: Large ribosomal subunit protein bL25 (190 aa).

This sequence belongs to the bacterial ribosomal protein bL25 family. CTC subfamily. As to quaternary structure, part of the 50S ribosomal subunit; part of the 5S rRNA/L5/L18/L25 subcomplex. Contacts the 5S rRNA. Binds to the 5S rRNA independently of L5 and L18.

Its function is as follows. This is one of the proteins that binds to the 5S RNA in the ribosome where it forms part of the central protuberance. In Neisseria meningitidis serogroup C / serotype 2a (strain ATCC 700532 / DSM 15464 / FAM18), this protein is Large ribosomal subunit protein bL25.